A 786-amino-acid chain; its full sequence is Endonuclease MutS2 (786 aa).

332-339 (GPNTGGKT) serves as a coordination point for ATP. Positions 711-786 (IDLRGMDSME…GTGVTVVELK (76 aa)) constitute a Smr domain.

The protein belongs to the DNA mismatch repair MutS family. MutS2 subfamily. As to quaternary structure, homodimer. Binds to stalled ribosomes, contacting rRNA.

Functionally, endonuclease that is involved in the suppression of homologous recombination and thus may have a key role in the control of bacterial genetic diversity. In terms of biological role, acts as a ribosome collision sensor, splitting the ribosome into its 2 subunits. Detects stalled/collided 70S ribosomes which it binds and splits by an ATP-hydrolysis driven conformational change. Acts upstream of the ribosome quality control system (RQC), a ribosome-associated complex that mediates the extraction of incompletely synthesized nascent chains from stalled ribosomes and their subsequent degradation. Probably generates substrates for RQC. The polypeptide is Endonuclease MutS2 (Clostridium tetani (strain Massachusetts / E88)).